The following is a 328-amino-acid chain: Sin3 histone deacetylase corepressor complex component SDS3 (328 aa).

The span at 1 to 22 (MSAAGLLAPAPAPAAAPAAPEY) shows a compositional bias: low complexity. The tract at residues 1–69 (MSAAGLLAPA…HDEEDYVEMK (69 aa)) is disordered. S2 bears the N-acetylserine mark. Residues 2-170 (SAAGLLAPAP…IENEKLTMEL (169 aa)) form a mediates interaction with USP17L2 region. Composition is skewed to acidic residues over residues 23-37 (YPED…EDDE) and 45-54 (SDEDTEDASE). A phosphoserine mark is found at S32 and S45. At T49 the chain carries Phosphothreonine. S53 is modified (phosphoserine). Positions 56–69 (DLAKHDEEDYVEMK) are enriched in basic and acidic residues. Positions 66–171 (VEMKEQMYQD…ENEKLTMELT (106 aa)) form a coiled coil. Residues K69, K178, and K201 each participate in a glycyl lysine isopeptide (Lys-Gly) (interchain with G-Cter in SUMO2) cross-link. Positions 188-226 (RPNDPVPIPDKRRKPAPAQLNYLLTDEQIMEDLRTLNKL) are sin3 interaction domain (SID). Positions 226-252 (LKSPKRPASPSSPEHLPATPAESPAQR) are disordered. Residues S228, S234, and S237 each carry the phosphoserine modification. At T244 the chain carries Phosphothreonine.

It belongs to the SDS3 family. In terms of assembly, interacts with HCFC1. Homodimer. Component of the SIN3 histone deacetylase (HDAC) corepressor complex. Interacts with SIN3A. Interaction with SIN3B enhances the interaction between SIN3B and HDAC1 to form a complex. Component of a mSin3A corepressor complex that contains SIN3A, SAP130, SUDS3/SAP45, ARID4B/SAP180, HDAC1 and HDAC2. Interacts with USP17L2; the interaction is direct. Interacts with FOXK2. In terms of processing, polyubiquitinated. 'Lys-63'-polyubiquitinated SUDS3 positively regulates histone deacetylation. Regulated through deubiquitination by USP17L2/USP17 that cleaves 'Lys-63'-linked ubiquitin chains. Expressed in all newborn tissues tested, including brain, kidney and liver.

The protein resides in the nucleus. Functionally, regulatory protein which represses transcription and augments histone deacetylase activity of HDAC1. May have a potential role in tumor suppressor pathways through regulation of apoptosis. May function in the assembly and/or enzymatic activity of the mSin3A corepressor complex or in mediating interactions between the complex and other regulatory complexes. This Mus musculus (Mouse) protein is Sin3 histone deacetylase corepressor complex component SDS3 (Suds3).